Consider the following 386-residue polypeptide: Succinate--CoA ligase [ADP-forming] subunit beta (386 aa).

The ATP-grasp domain maps to 9 to 244 (KELLKQFGVP…LDEEDPAEIE (236 aa)). Residues Lys46, 53 to 55 (GRG), Glu99, Ala102, and Glu107 contribute to the ATP site. Positions 199 and 213 each coordinate Mg(2+). Substrate is bound by residues Asn264 and 321–323 (GIM).

Belongs to the succinate/malate CoA ligase beta subunit family. As to quaternary structure, heterotetramer of two alpha and two beta subunits. The cofactor is Mg(2+).

The catalysed reaction is succinate + ATP + CoA = succinyl-CoA + ADP + phosphate. It catalyses the reaction GTP + succinate + CoA = succinyl-CoA + GDP + phosphate. Its pathway is carbohydrate metabolism; tricarboxylic acid cycle; succinate from succinyl-CoA (ligase route): step 1/1. Its function is as follows. Succinyl-CoA synthetase functions in the citric acid cycle (TCA), coupling the hydrolysis of succinyl-CoA to the synthesis of either ATP or GTP and thus represents the only step of substrate-level phosphorylation in the TCA. The beta subunit provides nucleotide specificity of the enzyme and binds the substrate succinate, while the binding sites for coenzyme A and phosphate are found in the alpha subunit. The sequence is that of Succinate--CoA ligase [ADP-forming] subunit beta from Bordetella avium (strain 197N).